The following is a 1100-amino-acid chain: cGMP-inhibited 3',5'-cyclic phosphodiesterase 3B (1100 aa).

The segment covering 1–11 (MRKDERERDAP) has biased composition (basic and acidic residues). The segment at 1–28 (MRKDERERDAPAMRSPPPPPASAASPPE) is interaction with RAPGEF3. A disordered region spans residues 1-29 (MRKDERERDAPAMRSPPPPPASAASPPES). Position 15 is a phosphoserine (Ser-15). Helical transmembrane passes span 69–89 (AGAR…LLGA), 110–130 (LSLS…CFLT), 140–160 (AGSW…FAAW), 170–190 (PAAA…TLAP), 198–218 (VLVL…LGAL), and 225–245 (LLSC…DHFF). Ser-273 is subject to Phosphoserine; by PKB/AKT1 or PKB/AKT2. 2 positions are modified to phosphoserine: Ser-274 and Ser-421. Disordered regions lie at residues 400-423 (RKLH…SSGA) and 570-590 (EPDG…SVFS). Positions 408 to 423 (GRTSFPTPQLRRSSGA) are enriched in polar residues. Positions 415–439 (PQLRRSSGASSLLTNEHCSRWDRSS) are interaction with PIK3R6. The segment covering 573-583 (GTDHPSEKSGE) has biased composition (basic and acidic residues). One can recognise a PDEase domain in the interval 627-1061 (PNIDQEVSLD…KIWKEIIEEE (435 aa)). His-713 (proton donor) is an active-site residue. His-713 provides a ligand contact to AMP. Positions 717, 797, 798, and 913 each coordinate Mg(2+). Residues Asp-798, Asp-913, and Gln-964 each coordinate AMP. The span at 993–1024 (EEGDDTESDDDDDDDDGDGGEELDSDDEETED) shows a compositional bias: acidic residues. Positions 993–1033 (EEGDDTESDDDDDDDDGDGGEELDSDDEETEDNLNPKPQRR) are disordered. The stretch at 1044–1079 (MHHLTENHKIWKEIIEEEEEKCKAEGNKLQVDNASL) forms a coiled coil.

It belongs to the cyclic nucleotide phosphodiesterase family. PDE3 subfamily. Homodimer. Interacts with PIK3CG; regulates PDE3B activity and thereby cAMP levels in cells. Interacts with RAPGEF3 and PIK3R6; form a signaling complex that regulates phosphatidylinositol 3-kinase gamma in angiogenesis. Interacts with ABHD15; this interaction regulates PDE3B's stability and expression and, thereby, impacts the antilipolytic action of insulin. Mg(2+) is required as a cofactor. Mn(2+) serves as cofactor. In terms of processing, phosphorylation at Ser-273 mediates insulin-induced activation of PDE3B. As to expression, abundant in adipose tissues.

It localises to the membrane. It carries out the reaction a nucleoside 3',5'-cyclic phosphate + H2O = a nucleoside 5'-phosphate + H(+). The catalysed reaction is 3',5'-cyclic AMP + H2O = AMP + H(+). The enzyme catalyses 3',5'-cyclic GMP + H2O = GMP + H(+). With respect to regulation, inhibited by cGMP. Its function is as follows. Cyclic nucleotide phosphodiesterase with a dual-specificity for the second messengers cAMP and cGMP, which are key regulators of many important physiological processes. Regulates angiogenesis by inhibiting the cAMP-dependent guanine nucleotide exchange factor RAPGEF3 and downstream phosphatidylinositol 3-kinase gamma-mediated signaling. Controls cardiac contractility by reducing cAMP concentration in cardiocytes. In Mus musculus (Mouse), this protein is cGMP-inhibited 3',5'-cyclic phosphodiesterase 3B.